A 92-amino-acid chain; its full sequence is MSFQRDYESEWNAALIEEYGEGGSGFSHGRFASLRMCEQRLYRPPGKVEEGTVKCPGCGSRRVHALQRQTRSADEPMTLFAMCSECGKRWTR.

The TFIIS-type zinc finger occupies 51–91; the sequence is GTVKCPGCGSRRVHALQRQTRSADEPMTLFAMCSECGKRWT. Residues Cys-55, Cys-58, Cys-83, and Cys-86 each contribute to the Zn(2+) site.

The sequence is that of Putative transcription elongation factor S-II-like protein 81R from Dryophytes versicolor (chameleon treefrog).